We begin with the raw amino-acid sequence, 326 residues long: Vestitone reductase (326 aa).

NADP(+) is bound by residues 12 to 18 (GGTGFLG), R37, and Y164.

This sequence belongs to the NAD(P)-dependent epimerase/dehydratase family. Dihydroflavonol-4-reductase subfamily. In terms of assembly, monomer. In terms of tissue distribution, detected in roots, and at lower levels in root nodules. Not detected in petioles, leaf and stem.

It carries out the reaction a (3R,4R)-4,2'-dihydroxyisoflavan + NADP(+) = a (3R)-2'-hydroxyisoflavanone + NADPH + H(+). With respect to regulation, inhibited by vestitone concentrations above 50 uM. Its function is as follows. Stereospecific enzyme that catalyzes the NADPH-dependent reduction of (3R)-vestitone to (3R,4R)-4'-methoxyisoflavan-2',4,7-triol (DMI). Has no activity with (3S)-vestitone. Catalyzes the penultimate step in the biosynthesis of the phytoalexin medicarpin, and thereby contributes to plant defense reactions. This Medicago sativa (Alfalfa) protein is Vestitone reductase.